A 248-amino-acid chain; its full sequence is Fasciclin-like arabinogalactan protein 19 (248 aa).

The signal sequence occupies residues 1-29 (MAKISSASCFRAIFLGALIILCLPHPSTG). An FAS1 domain is found at 35-166 (LERAIAILRV…IAVHGLADLL (132 aa)). Asparagine 114 and asparagine 136 each carry an N-linked (GlcNAc...) asparagine glycan. Over residues 213 to 226 (SPSVEEVSPSPSWG) the composition is skewed to low complexity. The disordered stretch occupies residues 213-248 (SPSVEEVSPSPSWGEGEEDFIVGDEGGPLDGRNNGF).

Belongs to the fasciclin-like AGP family.

Its subcellular location is the secreted. May be a cell surface adhesion protein. In Arabidopsis thaliana (Mouse-ear cress), this protein is Fasciclin-like arabinogalactan protein 19 (FLA19).